A 396-amino-acid chain; its full sequence is Phosphoglycerate kinase (396 aa).

Substrate-binding positions include 21-23 (DFN), Arg37, 60-63 (HLGR), Arg121, and Arg154. ATP is bound by residues Lys205, Gly296, Glu327, and 353–356 (GGDS).

It belongs to the phosphoglycerate kinase family. In terms of assembly, monomer.

It is found in the cytoplasm. It carries out the reaction (2R)-3-phosphoglycerate + ATP = (2R)-3-phospho-glyceroyl phosphate + ADP. It functions in the pathway carbohydrate degradation; glycolysis; pyruvate from D-glyceraldehyde 3-phosphate: step 2/5. The chain is Phosphoglycerate kinase from Anaeromyxobacter dehalogenans (strain 2CP-C).